A 165-amino-acid chain; its full sequence is Regulator of ribonuclease activity A (165 aa).

Belongs to the RraA family. As to quaternary structure, homotrimer. Binds to both RNA-binding sites in the C-terminal region of Rne and to RhlB.

It localises to the cytoplasm. Its function is as follows. Globally modulates RNA abundance by binding to RNase E (Rne) and regulating its endonucleolytic activity. Can modulate Rne action in a substrate-dependent manner by altering the composition of the degradosome. Modulates RNA-binding and helicase activities of the degradosome. This chain is Regulator of ribonuclease activity A, found in Haemophilus ducreyi (strain 35000HP / ATCC 700724).